The sequence spans 165 residues: GTPase activating protein 1 (165 aa).

Positions 1 to 105 (MLGHLVGLVK…VVKMKIEGVA (105 aa)) constitute a C2 domain. The Ca(2+) site is built by Arg-22, Asp-23, Asp-28, Asp-74, Lys-75, Asp-76, and Asp-81.

It belongs to the plant CAR protein family. Binds to PYR/PYL/RCAR abscisic acid intracellular receptors in an ABA-independent manner, both at the plasma membrane and in the nucleus. Binds phospholipids in a Ca(2+)-dependent manner. Interacts with YchF1.

The protein localises to the cell membrane. It is found in the nucleus. The protein resides in the cytoplasm. Its subcellular location is the cytosol. Its function is as follows. Mediates the transient calcium-dependent interaction of PYR/PYL/RCAR abscisic acid (ABA) receptors with the plasma membrane and thus regulates ABA sensitivity. Stimulates the GTPase/ATPase activities of YchF1, and regulates its subcellular localization. Promotes tolerance towards salinity stress by limiting the accumulation of reactive oxygen species (ROS). Promotes resistance to bacterial pathogens. The polypeptide is GTPase activating protein 1 (Oryza sativa subsp. indica (Rice)).